The chain runs to 746 residues: Exocyst complex component 3-like protein (746 aa).

Residues 1–23 are disordered; sequence MDSAAKDEMQPALSPGPEWPEQE. The mediates interaction with EXOC2, EXOC4 and EXOC5 stretch occupies residues 1-370; the sequence is MDSAAKDEMQ…DVSQLEPLLT (370 aa).

The protein belongs to the SEC6 family. In terms of assembly, interacts with EXOC2, EXOC4 and EXOC5; may be part of the exocyst.

Its subcellular location is the cytoplasmic vesicle. The protein localises to the secretory vesicle. As part of the exocyst, may play a role in regulated exocytosis of insulin granules. The polypeptide is Exocyst complex component 3-like protein (EXOC3L1) (Homo sapiens (Human)).